Here is a 122-residue protein sequence, read N- to C-terminus: Large ribosomal subunit protein uL14 (122 aa).

This sequence belongs to the universal ribosomal protein uL14 family. Part of the 50S ribosomal subunit. Forms a cluster with proteins L3 and L19. In the 70S ribosome, L14 and L19 interact and together make contacts with the 16S rRNA in bridges B5 and B8.

Its function is as follows. Binds to 23S rRNA. Forms part of two intersubunit bridges in the 70S ribosome. The chain is Large ribosomal subunit protein uL14 from Sulfurimonas denitrificans (strain ATCC 33889 / DSM 1251) (Thiomicrospira denitrificans (strain ATCC 33889 / DSM 1251)).